The sequence spans 743 residues: Phosphoribosylformylglycinamidine synthase subunit PurL (743 aa).

Histidine 50 is an active-site residue. ATP contacts are provided by tyrosine 53 and lysine 92. Glutamate 94 is a binding site for Mg(2+). Residues 95 to 98 (SHNH) and arginine 117 contribute to the substrate site. The active-site Proton acceptor is histidine 96. Residue aspartate 118 coordinates Mg(2+). Glutamine 241 provides a ligand contact to substrate. Residue aspartate 269 participates in Mg(2+) binding. 313–315 (ESQ) contacts substrate. Residues aspartate 495 and glycine 532 each contribute to the ATP site. A Mg(2+)-binding site is contributed by asparagine 533. Serine 535 contacts substrate.

Belongs to the FGAMS family. Monomer. Part of the FGAM synthase complex composed of 1 PurL, 1 PurQ and 2 PurS subunits.

The protein resides in the cytoplasm. The catalysed reaction is N(2)-formyl-N(1)-(5-phospho-beta-D-ribosyl)glycinamide + L-glutamine + ATP + H2O = 2-formamido-N(1)-(5-O-phospho-beta-D-ribosyl)acetamidine + L-glutamate + ADP + phosphate + H(+). Its pathway is purine metabolism; IMP biosynthesis via de novo pathway; 5-amino-1-(5-phospho-D-ribosyl)imidazole from N(2)-formyl-N(1)-(5-phospho-D-ribosyl)glycinamide: step 1/2. Part of the phosphoribosylformylglycinamidine synthase complex involved in the purines biosynthetic pathway. Catalyzes the ATP-dependent conversion of formylglycinamide ribonucleotide (FGAR) and glutamine to yield formylglycinamidine ribonucleotide (FGAM) and glutamate. The FGAM synthase complex is composed of three subunits. PurQ produces an ammonia molecule by converting glutamine to glutamate. PurL transfers the ammonia molecule to FGAR to form FGAM in an ATP-dependent manner. PurS interacts with PurQ and PurL and is thought to assist in the transfer of the ammonia molecule from PurQ to PurL. The sequence is that of Phosphoribosylformylglycinamidine synthase subunit PurL from Rhizobium etli (strain ATCC 51251 / DSM 11541 / JCM 21823 / NBRC 15573 / CFN 42).